The primary structure comprises 326 residues: Eukaryotic translation initiation factor 2 subunit 1 (326 aa).

The S1 motif domain maps to 24 to 95 (DDLIMVKVNR…QKGYIDLSKR (72 aa)). Position 59 is a phosphoserine; by eIK1, eIK2 and PK4 (Ser-59). Positions 291–326 (LDKHDGLSSDDEYSSDGDEDDSSNDDDNSSDEDDDD) are disordered. Acidic residues predominate over residues 298–326 (SSDDEYSSDGDEDDSSNDDDNSSDEDDDD).

It belongs to the eIF-2-alpha family. Phosphorylates at Ser-59 in mature trophozoites, schizonts and gametocytes but not in rings and young trophozoites. Phosphorylates at Ser-59 by eIK2 in salivary gland sporozoites but not in midgut and hemocoel sporozoites. Dephosphorylated at Ser-59 by UIS2. Phosphorylation of eIF2alpha subunit of the pre-initiation complex eIF2 inhibits recycling of inactive eIF2-GDP to active eIF2-GTP by limiting the activity of the guanine nucleotide exchange factor eIF2B and thus, inhibits protein translation.

It is found in the cytoplasm. The protein localises to the stress granule. Functions in the early steps of protein synthesis by forming a ternary complex with GTP and initiator tRNA. May regulate protein translation in response to amino acid starvation. May regulate protein at various stages of parasite development. This is Eukaryotic translation initiation factor 2 subunit 1 from Plasmodium berghei (strain Anka).